The sequence spans 389 residues: MSDIAPAAHSPYIPPTPEVGLPLWLLAELTYRCPLQCPYCSNPLDFARQGQELTTEQWFKVMQEAREMGAAQIGFSGGEPLVRQDLAELIAEARRLGFYTNLITSGIGLTEEKIIAFKKAGLDHIQISFQASDEQVNNMLAGSKKAFAQKLEMAKAVKKHGYPMVLNFVTHRHNIDRIDKIIELCLALEADFVELATCQFYGWAHLNRVGLLPTKDQLVRAEAVTNEYRDQLAAQDHPCKLIFVTPDYYEERPKACMNGWGNIFLTVTPDGTALPCHGARQMPIQFPNVREHSMQHIWYDSFGFNRFRGYDWMPEPCRSCDEKEKDFGGCRCQAFMLTGDAANADPVCSKSYHHGIITQARDESETATQTIEELAFRNDRNSRLIAKSS.

Residues 19–234 (VGLPLWLLAE…TNEYRDQLAA (216 aa)) enclose the Radical SAM core domain. 3 residues coordinate [4Fe-4S] cluster: cysteine 33, cysteine 37, and cysteine 40.

This sequence belongs to the radical SAM superfamily. PqqE family. Interacts with PqqD. The interaction is necessary for activity of PqqE. The cofactor is [4Fe-4S] cluster.

The enzyme catalyses [PQQ precursor protein] + S-adenosyl-L-methionine = E-Y cross-linked-[PQQ precursor protein] + 5'-deoxyadenosine + L-methionine + H(+). The protein operates within cofactor biosynthesis; pyrroloquinoline quinone biosynthesis. Functionally, catalyzes the cross-linking of a glutamate residue and a tyrosine residue in the PqqA protein as part of the biosynthesis of pyrroloquinoline quinone (PQQ). This is PqqA peptide cyclase from Pseudomonas syringae pv. tomato (strain ATCC BAA-871 / DC3000).